The following is a 329-amino-acid chain: Glycerol-3-phosphate dehydrogenase [NAD(P)+] (329 aa).

3 residues coordinate NADPH: tryptophan 11, arginine 31, and lysine 105. Positions 105, 135, and 137 each coordinate sn-glycerol 3-phosphate. Alanine 139 contributes to the NADPH binding site. Residues lysine 190, aspartate 243, serine 253, arginine 254, and asparagine 255 each contribute to the sn-glycerol 3-phosphate site. Lysine 190 functions as the Proton acceptor in the catalytic mechanism. Arginine 254 is a binding site for NADPH. NADPH is bound by residues valine 277 and glutamate 279.

This sequence belongs to the NAD-dependent glycerol-3-phosphate dehydrogenase family.

It localises to the cytoplasm. It catalyses the reaction sn-glycerol 3-phosphate + NAD(+) = dihydroxyacetone phosphate + NADH + H(+). The catalysed reaction is sn-glycerol 3-phosphate + NADP(+) = dihydroxyacetone phosphate + NADPH + H(+). It functions in the pathway membrane lipid metabolism; glycerophospholipid metabolism. In terms of biological role, catalyzes the reduction of the glycolytic intermediate dihydroxyacetone phosphate (DHAP) to sn-glycerol 3-phosphate (G3P), the key precursor for phospholipid synthesis. In Maridesulfovibrio salexigens (strain ATCC 14822 / DSM 2638 / NCIMB 8403 / VKM B-1763) (Desulfovibrio salexigens), this protein is Glycerol-3-phosphate dehydrogenase [NAD(P)+].